Reading from the N-terminus, the 103-residue chain is Phospholipase A2 large subunit (103 aa).

Ca(2+) contacts are provided by tryptophan 7, glycine 9, and glycine 11. 4 cysteine pairs are disulfide-bonded: cysteine 8–cysteine 30, cysteine 29–cysteine 68, cysteine 36–cysteine 61, and cysteine 59–cysteine 96. Asparagine 16 carries N-linked (GlcNAc...) asparagine glycosylation. Residue histidine 33 is part of the active site. Residue aspartate 34 coordinates Ca(2+).

Belongs to the phospholipase A2 family. Group III subfamily. Heterodimer composed of a large subunit and a small subunit; disulfide-linked. Requires Ca(2+) as cofactor. As to expression, expressed by the venom gland.

The protein resides in the secreted. It carries out the reaction a 1,2-diacyl-sn-glycero-3-phosphocholine + H2O = a 1-acyl-sn-glycero-3-phosphocholine + a fatty acid + H(+). Its function is as follows. Phospholipase toxin, which catalyzes the calcium-dependent hydrolysis of the 2-acyl groups in 3-sn-phosphoglycerides. Inhibits both skeletal (RYR1) and cardiac (RYR2) ryanodine receptors (calcium release channels). Probably blocks ryanodine receptors by generating a lipid product. The sequence is that of Phospholipase A2 large subunit from Chersonesometrus fulvipes (Indian black scorpion).